The chain runs to 152 residues: MFP1 attachment factor 1 (152 aa).

Disordered regions lie at residues 1–33 (MAEI…PPTQ) and 107–152 (DTVK…ETEP). The WPP stretch occupies residues 12–115 (TVTQETQNKP…IDTVKSRSAP (104 aa)). Polar residues predominate over residues 134–152 (EPSSASGLTGEVSSVETEP).

Interacts with WAP through its WPP domain. Binds to MFP1 and FPP proteins. Expressed in young tomato leaves, young fruits, and flowers (at protein level).

It localises to the nucleus envelope. Its subcellular location is the cytoplasm. The protein resides in the golgi apparatus. The protein localises to the nucleus. It is found in the nucleus matrix. This chain is MFP1 attachment factor 1 (MAF1), found in Solanum lycopersicum (Tomato).